The sequence spans 570 residues: BRICHOS domain-containing protein C09F5.1 (570 aa).

Over 1–288 the chain is Cytoplasmic; that stretch reads MVVEQIEVIE…YTPELLRSLC (288 aa). Composition is skewed to polar residues over residues 93–107 and 228–246; these read SGAT…SGDS and TSTL…SLVS. 2 disordered regions span residues 93–116 and 218–248; these read SGAT…GADR and SSWD…VSRE. The helical transmembrane segment at 289–309 threads the bilayer; sequence CILLLLLLLLFLMFIIFNAIF. The Extracellular segment spans residues 310–570; sequence NRYAVSEFLL…RKSINNATLV (261 aa). The BRICHOS domain maps to 369–461; that stretch reads TAVDFNTGYV…IDDCEGAQWY (93 aa). A disulfide bridge links C395 with C455.

The protein localises to the membrane. In Caenorhabditis elegans, this protein is BRICHOS domain-containing protein C09F5.1.